A 261-amino-acid polypeptide reads, in one-letter code: Class II histocompatibility antigen, M alpha chain (261 aa).

Residues 1 to 26 form the signal peptide; sequence MEHEQKSGAVLLRLLRLLWLLPHSWA. Residues 27–124 form an alpha-1 region; sequence VLEASTPVLW…KLEGQIPVSR (98 aa). The Lumenal segment spans residues 27–231; sequence VLEASTPVLW…ALPSDLLENA (205 aa). A glycan (N-linked (GlcNAc...) asparagine) is linked at asparagine 41. Intrachain disulfides connect cysteine 50-cysteine 105 and cysteine 147-cysteine 202. Residues 114–215 enclose the Ig-like C1-type domain; it reads PKLEGQIPVS…HEIDRYTAIA (102 aa). Residues 125–217 are alpha-2; that stretch reads GLSVAEVFTL…IDRYTAIAYW (93 aa). Residues 218-231 form a connecting peptide region; that stretch reads VPQNALPSDLLENA. Residues 232–252 traverse the membrane as a helical segment; it reads LCGVAFALGVLGTIIGIVFFL. At 253-261 the chain is on the cytoplasmic side; sequence CSQRPCSGD.

Belongs to the MHC class II family. As to quaternary structure, heterodimer of an alpha chain (DMA) and a beta chain (DMB). Interacts with MHCII; this interaction mediates rapid selection of high-affinity peptides.

Its subcellular location is the late endosome membrane. It is found in the lysosome membrane. In terms of biological role, plays a critical role in catalyzing the release of class II-associated invariant chain peptide (CLIP) from newly synthesized MHC class II molecules and freeing the peptide binding site for acquisition of antigenic peptides. The sequence is that of Class II histocompatibility antigen, M alpha chain (H2-DMa) from Mus musculus (Mouse).